The chain runs to 204 residues: MATTTQPAHAEAPQQGGLLRAALVIFVGLSLVTGVLYPVVVTGIGKAAFPAQAGGSIIERGGKPVGSALIGQNFSEPQYFWGRLSATSPNPYNGAASSGSNLGPSNPALTDAAKARIAALKEADPANTAPIPVDLVTASASGLDPHISPAAAAYQVERVARARHLPVERVKTLVAEHTTAPILGVFGEPVVNVLELNLGLGDLK.

Residues 21–41 traverse the membrane as a helical segment; the sequence is AALVIFVGLSLVTGVLYPVVV.

Belongs to the KdpC family. In terms of assembly, the system is composed of three essential subunits: KdpA, KdpB and KdpC.

The protein resides in the cell inner membrane. Its function is as follows. Part of the high-affinity ATP-driven potassium transport (or Kdp) system, which catalyzes the hydrolysis of ATP coupled with the electrogenic transport of potassium into the cytoplasm. This subunit acts as a catalytic chaperone that increases the ATP-binding affinity of the ATP-hydrolyzing subunit KdpB by the formation of a transient KdpB/KdpC/ATP ternary complex. The sequence is that of Potassium-transporting ATPase KdpC subunit from Ralstonia nicotianae (strain ATCC BAA-1114 / GMI1000) (Ralstonia solanacearum).